A 461-amino-acid polypeptide reads, in one-letter code: Trigger factor (461 aa).

The region spanning 169 to 256 (GDTAVIDFAG…LKDLKIKELP (88 aa)) is the PPIase FKBP-type domain. The disordered stretch occupies residues 432–461 (PGEAIEPGSGEDAPPEVAAGATEPEAQPNS).

It belongs to the FKBP-type PPIase family. Tig subfamily.

The protein localises to the cytoplasm. The catalysed reaction is [protein]-peptidylproline (omega=180) = [protein]-peptidylproline (omega=0). Functionally, involved in protein export. Acts as a chaperone by maintaining the newly synthesized protein in an open conformation. Functions as a peptidyl-prolyl cis-trans isomerase. This Gloeobacter violaceus (strain ATCC 29082 / PCC 7421) protein is Trigger factor.